The sequence spans 1378 residues: Hybrid signal transduction histidine kinase H (1378 aa).

Residues Lys-212–Arg-242 are a coiled coil. The region spanning Ile-243–Asn-314 is the PAS domain. The segment at Tyr-294–Thr-337 is disordered. The segment covering Asn-298–Thr-337 has biased composition (low complexity). In terms of domain architecture, Histidine kinase spans Thr-498–Phe-805. His-501 bears the Phosphohistidine; by autocatalysis mark. Residues Asn-663–Asn-696 show a composition bias toward low complexity. Disordered regions lie at residues Asn-663–Cys-717, Thr-905–Thr-924, and Asn-1103–Pro-1213. A compositionally biased stretch (basic residues) spans His-697 to Asp-714. 2 stretches are compositionally biased toward low complexity: residues Asn-1103 to Ser-1119 and Ser-1136 to Asn-1187. A compositionally biased stretch (polar residues) spans Leu-1188–His-1206. One can recognise a Response regulatory domain in the interval Lys-1244–Trp-1364. Asp-1297 is subject to 4-aspartylphosphate.

Activation probably requires transfer of a phosphate group between a histidine in the kinase core (transmitter) domain and an aspartate of the receiver domain.

The catalysed reaction is ATP + protein L-histidine = ADP + protein N-phospho-L-histidine.. Acts as a receptor histidine kinase for a signal transduction pathway. This protein undergoes an ATP-dependent autophosphorylation at a conserved histidine residue in the kinase core, and a phosphoryl group is then transferred to a conserved aspartate residue in the receiver domain. This Dictyostelium discoideum (Social amoeba) protein is Hybrid signal transduction histidine kinase H (dhkH).